Here is a 397-residue protein sequence, read N- to C-terminus: Phosphoglycerate kinase (397 aa).

Residues 23 to 25 (DFN), arginine 38, 61 to 64 (HMGK), arginine 122, and arginine 155 contribute to the substrate site. ATP is bound by residues lysine 206, glycine 296, glutamate 327, and 353 to 356 (GGDS).

This sequence belongs to the phosphoglycerate kinase family. As to quaternary structure, monomer.

The protein localises to the cytoplasm. The enzyme catalyses (2R)-3-phosphoglycerate + ATP = (2R)-3-phospho-glyceroyl phosphate + ADP. It participates in carbohydrate degradation; glycolysis; pyruvate from D-glyceraldehyde 3-phosphate: step 2/5. The chain is Phosphoglycerate kinase from Clostridium perfringens (strain ATCC 13124 / DSM 756 / JCM 1290 / NCIMB 6125 / NCTC 8237 / Type A).